We begin with the raw amino-acid sequence, 203 residues long: Pyridoxal 5'-phosphate synthase subunit PdxT (203 aa).

51 to 53 (GES) lines the L-glutamine pocket. C83 functions as the Nucleophile in the catalytic mechanism. L-glutamine is bound by residues R110 and 137–138 (IR). Active-site charge relay system residues include H172 and E174.

The protein belongs to the glutaminase PdxT/SNO family. In the presence of PdxS, forms a dodecamer of heterodimers. Only shows activity in the heterodimer.

The enzyme catalyses aldehydo-D-ribose 5-phosphate + D-glyceraldehyde 3-phosphate + L-glutamine = pyridoxal 5'-phosphate + L-glutamate + phosphate + 3 H2O + H(+). It carries out the reaction L-glutamine + H2O = L-glutamate + NH4(+). The protein operates within cofactor biosynthesis; pyridoxal 5'-phosphate biosynthesis. Functionally, catalyzes the hydrolysis of glutamine to glutamate and ammonia as part of the biosynthesis of pyridoxal 5'-phosphate. The resulting ammonia molecule is channeled to the active site of PdxS. In Thermoplasma acidophilum (strain ATCC 25905 / DSM 1728 / JCM 9062 / NBRC 15155 / AMRC-C165), this protein is Pyridoxal 5'-phosphate synthase subunit PdxT.